A 55-amino-acid chain; its full sequence is ATP synthase F(0) complex subunit 8 (55 aa).

The helical transmembrane segment at 4–24 (LNPAPWFMIFMFTWAIFLTIL) threads the bilayer. Residues 34 to 55 (PNEPSPQGMTTPKTAPWNWPWH) are disordered.

It belongs to the ATPase protein 8 family. As to quaternary structure, component of the ATP synthase complex composed at least of ATP5F1A/subunit alpha, ATP5F1B/subunit beta, ATP5MC1/subunit c (homooctomer), MT-ATP6/subunit a, MT-ATP8/subunit 8, ATP5ME/subunit e, ATP5MF/subunit f, ATP5MG/subunit g, ATP5MK/subunit k, ATP5MJ/subunit j, ATP5F1C/subunit gamma, ATP5F1D/subunit delta, ATP5F1E/subunit epsilon, ATP5PF/subunit F6, ATP5PB/subunit b, ATP5PD/subunit d, ATP5PO/subunit OSCP. ATP synthase complex consists of a soluble F(1) head domain (subunits alpha(3) and beta(3)) - the catalytic core - and a membrane F(0) domain - the membrane proton channel (subunits c, a, 8, e, f, g, k and j). These two domains are linked by a central stalk (subunits gamma, delta, and epsilon) rotating inside the F1 region and a stationary peripheral stalk (subunits F6, b, d, and OSCP).

It localises to the mitochondrion membrane. Subunit 8, of the mitochondrial membrane ATP synthase complex (F(1)F(0) ATP synthase or Complex V) that produces ATP from ADP in the presence of a proton gradient across the membrane which is generated by electron transport complexes of the respiratory chain. ATP synthase complex consist of a soluble F(1) head domain - the catalytic core - and a membrane F(1) domain - the membrane proton channel. These two domains are linked by a central stalk rotating inside the F(1) region and a stationary peripheral stalk. During catalysis, ATP synthesis in the catalytic domain of F(1) is coupled via a rotary mechanism of the central stalk subunits to proton translocation. In vivo, can only synthesize ATP although its ATP hydrolase activity can be activated artificially in vitro. Part of the complex F(0) domain. The chain is ATP synthase F(0) complex subunit 8 from Gadus morhua (Atlantic cod).